A 306-amino-acid polypeptide reads, in one-letter code: tRNA dimethylallyltransferase (306 aa).

Residue 12 to 19 (GPTGVGKS) coordinates ATP. 14–19 (TGVGKS) contributes to the substrate binding site.

It belongs to the IPP transferase family. Monomer. Mg(2+) is required as a cofactor.

The catalysed reaction is adenosine(37) in tRNA + dimethylallyl diphosphate = N(6)-dimethylallyladenosine(37) in tRNA + diphosphate. Catalyzes the transfer of a dimethylallyl group onto the adenine at position 37 in tRNAs that read codons beginning with uridine, leading to the formation of N6-(dimethylallyl)adenosine (i(6)A). The chain is tRNA dimethylallyltransferase from Desulfatibacillum aliphaticivorans.